A 287-amino-acid polypeptide reads, in one-letter code: Acetyl-coenzyme A carboxylase carboxyl transferase subunit beta (287 aa).

The 263-residue stretch at 25-287 (VWTKCSACEQ…KMLNTHVIEE (263 aa)) folds into the CoA carboxyltransferase N-terminal domain. Positions 29, 32, 48, and 51 each coordinate Zn(2+). A C4-type zinc finger spans residues 29-51 (CSACEQVLYRAELERNLEVCPKC).

This sequence belongs to the AccD/PCCB family. In terms of assembly, acetyl-CoA carboxylase is a heterohexamer composed of biotin carboxyl carrier protein (AccB), biotin carboxylase (AccC) and two subunits each of ACCase subunit alpha (AccA) and ACCase subunit beta (AccD). Zn(2+) serves as cofactor.

It is found in the cytoplasm. It catalyses the reaction N(6)-carboxybiotinyl-L-lysyl-[protein] + acetyl-CoA = N(6)-biotinyl-L-lysyl-[protein] + malonyl-CoA. It functions in the pathway lipid metabolism; malonyl-CoA biosynthesis; malonyl-CoA from acetyl-CoA: step 1/1. Component of the acetyl coenzyme A carboxylase (ACC) complex. Biotin carboxylase (BC) catalyzes the carboxylation of biotin on its carrier protein (BCCP) and then the CO(2) group is transferred by the transcarboxylase to acetyl-CoA to form malonyl-CoA. This is Acetyl-coenzyme A carboxylase carboxyl transferase subunit beta from Aeromonas hydrophila subsp. hydrophila (strain ATCC 7966 / DSM 30187 / BCRC 13018 / CCUG 14551 / JCM 1027 / KCTC 2358 / NCIMB 9240 / NCTC 8049).